Consider the following 323-residue polypeptide: Thymidylate synthase (323 aa).

Residues Arg-21 and 172 to 173 each bind dUMP; that span reads RR. Catalysis depends on Cys-192, which acts as the Nucleophile. DUMP is bound by residues 214–217, Asn-225, and 255–257; these read RSND and HVY. Asp-217 contacts (6R)-5,10-methylene-5,6,7,8-tetrahydrofolate. Ala-322 contacts (6R)-5,10-methylene-5,6,7,8-tetrahydrofolate.

This sequence belongs to the thymidylate synthase family. Bacterial-type ThyA subfamily. Homodimer.

Its subcellular location is the cytoplasm. The enzyme catalyses dUMP + (6R)-5,10-methylene-5,6,7,8-tetrahydrofolate = 7,8-dihydrofolate + dTMP. It participates in pyrimidine metabolism; dTTP biosynthesis. Its function is as follows. Catalyzes the reductive methylation of 2'-deoxyuridine-5'-monophosphate (dUMP) to 2'-deoxythymidine-5'-monophosphate (dTMP) while utilizing 5,10-methylenetetrahydrofolate (mTHF) as the methyl donor and reductant in the reaction, yielding dihydrofolate (DHF) as a by-product. This enzymatic reaction provides an intracellular de novo source of dTMP, an essential precursor for DNA biosynthesis. The chain is Thymidylate synthase from Pseudomonas syringae pv. tomato (strain ATCC BAA-871 / DC3000).